Reading from the N-terminus, the 252-residue chain is Probable transcriptional regulator SauR (252 aa).

One can recognise an HTH iclR-type domain in the interval 6-68 (NAAAVRAFRI…AGNRHYECSS (63 aa)). The H-T-H motif DNA-binding region spans 28 to 47 (LAAIVQAIELPKQTVHRILK). In terms of domain architecture, IclR-ED spans 83-252 (PAAARHAILQ…ADEMVKTFCE (170 aa)).

Its function is as follows. May regulate transcription of the sauSTU operon. The chain is Probable transcriptional regulator SauR (sauR) from Cupriavidus necator (strain ATCC 17699 / DSM 428 / KCTC 22496 / NCIMB 10442 / H16 / Stanier 337) (Ralstonia eutropha).